The sequence spans 245 residues: Large ribosomal subunit protein uL2 (245 aa).

Positions 196-226 (SPYAHPHGGGSHQKGGTPVSKTAPPGQKVGF) are disordered.

Belongs to the universal ribosomal protein uL2 family. In terms of assembly, part of the 50S ribosomal subunit. Forms a bridge to the 30S subunit in the 70S ribosome.

Its function is as follows. One of the primary rRNA binding proteins. Required for association of the 30S and 50S subunits to form the 70S ribosome, for tRNA binding and peptide bond formation. It has been suggested to have peptidyltransferase activity; this is somewhat controversial. Makes several contacts with the 16S rRNA in the 70S ribosome. The polypeptide is Large ribosomal subunit protein uL2 (Pyrobaculum neutrophilum (strain DSM 2338 / JCM 9278 / NBRC 100436 / V24Sta) (Thermoproteus neutrophilus)).